The chain runs to 97 residues: YcgL domain-containing protein Maqu_1609 (97 aa).

The YcgL domain maps to 5-89; the sequence is EFVSVFRSSK…EQDTYIVDFK (85 aa).

The chain is YcgL domain-containing protein Maqu_1609 from Marinobacter nauticus (strain ATCC 700491 / DSM 11845 / VT8) (Marinobacter aquaeolei).